The primary structure comprises 414 residues: Serine hydroxymethyltransferase (414 aa).

(6S)-5,6,7,8-tetrahydrofolate contacts are provided by residues Leu121 and 125–127 (GHL). An N6-(pyridoxal phosphate)lysine modification is found at Lys229.

The protein belongs to the SHMT family. In terms of assembly, homodimer. Pyridoxal 5'-phosphate serves as cofactor.

It is found in the cytoplasm. The enzyme catalyses (6R)-5,10-methylene-5,6,7,8-tetrahydrofolate + glycine + H2O = (6S)-5,6,7,8-tetrahydrofolate + L-serine. It participates in one-carbon metabolism; tetrahydrofolate interconversion. Its pathway is amino-acid biosynthesis; glycine biosynthesis; glycine from L-serine: step 1/1. Its function is as follows. Catalyzes the reversible interconversion of serine and glycine with tetrahydrofolate (THF) serving as the one-carbon carrier. This reaction serves as the major source of one-carbon groups required for the biosynthesis of purines, thymidylate, methionine, and other important biomolecules. Also exhibits THF-independent aldolase activity toward beta-hydroxyamino acids, producing glycine and aldehydes, via a retro-aldol mechanism. The chain is Serine hydroxymethyltransferase from Variovorax paradoxus (strain S110).